A 476-amino-acid chain; its full sequence is MAQYSAEFKQAKVLVLGDVMLDRYWFGATNRISPEAPVPVVRVQENEERAGGAANVAMNIASLNVPVQLMGLIGQDETGSALSLLLEKQKIDCNFVALETHPTITKLRILSRHQQLLRLDFEEDFNNVDCKDLLAKLESAVKNYGALILSDYGKGTLKDVQKMIQIARKANVPVLIDPKGTDFERYRGATLLTPNMSEFEAVVGKCNTEEEIIEKGLKLISDIELTALLVTRSEKGMTLLRPNQEPYHLPTVAKEVFDVTGAGDTVISVLATALADGRSFEESCYLANVAAGIVVGKLGTSTVSTVELENAIHARPETGFGIMSEAELKDAVAQAKARGEKIVMTNGCFDILHPGHISYLENARKLGDRLIVAVNSDDSVKRLKGESRPINNLENRMAVLAGLASVDWLVPFTEDTPQRLIGEILPDLLVKGGDYKPEEIAGSKEVWANGGDVKVLNFENGCSTTNVIEKIKLLKD.

Positions 1-318 (MAQYSAEFKQ…ENAIHARPET (318 aa)) are ribokinase. 195-198 (NMSE) is an ATP binding site. The active site involves Asp264. The segment at 344–476 (MTNGCFDILH…VIEKIKLLKD (133 aa)) is cytidylyltransferase.

In the N-terminal section; belongs to the carbohydrate kinase PfkB family. The protein in the C-terminal section; belongs to the cytidylyltransferase family. In terms of assembly, homodimer.

It carries out the reaction D-glycero-beta-D-manno-heptose 7-phosphate + ATP = D-glycero-beta-D-manno-heptose 1,7-bisphosphate + ADP + H(+). It catalyses the reaction D-glycero-beta-D-manno-heptose 1-phosphate + ATP + H(+) = ADP-D-glycero-beta-D-manno-heptose + diphosphate. It functions in the pathway nucleotide-sugar biosynthesis; ADP-L-glycero-beta-D-manno-heptose biosynthesis; ADP-L-glycero-beta-D-manno-heptose from D-glycero-beta-D-manno-heptose 7-phosphate: step 1/4. The protein operates within nucleotide-sugar biosynthesis; ADP-L-glycero-beta-D-manno-heptose biosynthesis; ADP-L-glycero-beta-D-manno-heptose from D-glycero-beta-D-manno-heptose 7-phosphate: step 3/4. Its pathway is bacterial outer membrane biogenesis; LOS core biosynthesis. Catalyzes the phosphorylation of D-glycero-D-manno-heptose 7-phosphate at the C-1 position to selectively form D-glycero-beta-D-manno-heptose-1,7-bisphosphate. Functionally, catalyzes the ADP transfer from ATP to D-glycero-beta-D-manno-heptose 1-phosphate, yielding ADP-D-glycero-beta-D-manno-heptose. This is Bifunctional protein HldE from Haemophilus influenzae (strain ATCC 51907 / DSM 11121 / KW20 / Rd).